Here is a 544-residue protein sequence, read N- to C-terminus: Coiled-coil domain-containing protein 82 (544 aa).

Residues Met-1–Lys-14 are compositionally biased toward basic residues. Residues Met-1–Ile-294 form a disordered region. A compositionally biased stretch (basic and acidic residues) spans His-16–Arg-27. Positions Asp-39–Leu-67 are enriched in acidic residues. Phosphoserine occurs at positions 88, 131, 154, 195, and 219. Polar residues predominate over residues Ser-88–Thr-108. The segment covering Glu-112–Gln-132 has biased composition (basic and acidic residues). Residues Met-223 to Lys-248 show a composition bias toward basic and acidic residues. Position 227 is a phosphothreonine (Thr-227). A coiled-coil region spans residues Glu-229–Ser-256. A compositionally biased stretch (acidic residues) spans Asp-273–Ile-294. Position 329 is a phosphoserine (Ser-329).

This chain is Coiled-coil domain-containing protein 82 (CCDC82), found in Homo sapiens (Human).